The primary structure comprises 58 residues: Cecropin-B (58 aa).

Positions 1-21 (ILSFVFACLLALSAVSAAPEP) are cleaved as a signal peptide.

The protein belongs to the cecropin family.

It is found in the secreted. Cecropins have lytic and antibacterial activity against several Gram-positive and Gram-negative bacteria. This Spodoptera litura (Asian cotton leafworm) protein is Cecropin-B (CECB).